The chain runs to 583 residues: Lamin-B3 (583 aa).

The disordered stretch occupies residues 1–30 (MATSTPSRAREHASAAQSPGSPTRISRMQE). A head region spans residues 2-32 (ATSTPSRAREHASAAQSPGSPTRISRMQEKE). Positions 15-26 (AAQSPGSPTRIS) are enriched in polar residues. Serine 21 is subject to Phosphoserine. An IF rod domain is found at 30-386 (EKEDLRHLND…KMLEGEEQRL (357 aa)). The segment at 33-67 (DLRHLNDRLAAYIERVRSLEADKSLLKIQLEEREE) is coil 1A. Positions 68–79 (VSSREVTNLRQL) are linker 1. The tract at residues 80 to 215 (YETELADARK…QKNIHTQEVK (136 aa)) is coil 1B. Residues 216–242 (EIKKRHDTRIVEIDSGRRVEFESKLAE) are linker 2. Residues 243 to 384 (ALQELRRDHE…YRKMLEGEEQ (142 aa)) are coil 2. Residues 383–431 (EQRLKLSPSPSQRSTVSRASTSQTSRLLRGKKRKLDETGRSVTKRSYKV) form a disordered region. A tail region spans residues 385–580 (RLKLSPSPSQ…QSHQSVDPSC (196 aa)). Over residues 390-408 (PSPSQRSTVSRASTSQTSR) the composition is skewed to polar residues. Residue serine 391 is modified to Phosphoserine. Residues 429 to 546 (YKVVQQASST…EECAERTLYR (118 aa)) enclose the LTD domain. Cysteine 580 carries the cysteine methyl ester modification. Residue cysteine 580 is the site of S-farnesyl cysteine attachment. The propeptide at 581-583 (SIM) is removed in mature form.

The protein belongs to the intermediate filament family. Phosphorylation plays a key role in lamin organization, subcellular localization and nuclear envelope disintegration. Phosphorylation by CDK1 at Ser-21 at the onset of mitosis drives lamin disassembly and nuclear envelope breakdown.

The protein localises to the nucleus lamina. Its subcellular location is the nucleus envelope. It localises to the nucleus. The protein resides in the nucleoplasm. It is found in the nucleus matrix. In terms of biological role, lamins are intermediate filament proteins that assemble into a filamentous meshwork, and which constitute the major components of the nuclear lamina, a fibrous layer on the nucleoplasmic side of the inner nuclear membrane. Lamins provide a framework for the nuclear envelope, bridging the nuclear envelope and chromatin, thereby playing an important role in nuclear assembly, chromatin organization, nuclear membrane and telomere dynamics. The structural integrity of the lamina is strictly controlled by the cell cycle, as seen by the disintegration and formation of the nuclear envelope in prophase and telophase, respectively. The protein is Lamin-B3 (lmnb3.L) of Xenopus laevis (African clawed frog).